A 278-amino-acid chain; its full sequence is Elongation factor Ts (278 aa).

The tract at residues 80 to 83 is involved in Mg(2+) ion dislocation from EF-Tu; sequence TDFV.

This sequence belongs to the EF-Ts family.

It is found in the cytoplasm. Functionally, associates with the EF-Tu.GDP complex and induces the exchange of GDP to GTP. It remains bound to the aminoacyl-tRNA.EF-Tu.GTP complex up to the GTP hydrolysis stage on the ribosome. The protein is Elongation factor Ts of Renibacterium salmoninarum (strain ATCC 33209 / DSM 20767 / JCM 11484 / NBRC 15589 / NCIMB 2235).